Reading from the N-terminus, the 1078-residue chain is A type blood alpha-D-galactosamine galactosaminidase (1078 aa).

The first 26 residues, 1–26, serve as a signal peptide directing secretion; the sequence is MRGKKFISLTLSTMLCLQLLPTASFA. Positions 306–570 are glycoside hydrolase 36 domain; sequence PDSSYDLRWE…NNIWYPSAVG (265 aa). The active-site Nucleophile is the Asp-463. Asp-532 is a catalytic residue. Residues 699–1078 are not required for activity on soluble substrates; it reads PDPEPVDPDY…LDYLTYTTNA (380 aa).

Belongs to the glycosyl hydrolase 36 family.

The catalysed reaction is an alpha-D-galactosaminyl-(1-&gt;3)-[alpha-L-fucosyl-(1-&gt;2)]-beta-D-galactosyl derivative + H2O = D-galactosamine + an alpha-L-fucosyl-(1-&gt;2)-beta-D-galactosyl derivative. Its function is as follows. One of an enzyme pair that work together to convert the A antigen to the H antigen of the O blood type, which together release galactosamine. Catalyzes the second step in the conversion, acts on the product of the first reaction (FpGalNAcDeAc, AC P0DTR4). Is specific for galactosamine containing sugars, does not cleave GalNAc residues. The polypeptide is A type blood alpha-D-galactosamine galactosaminidase (Flavonifractor plautii (Fusobacterium plautii)).